The following is a 94-amino-acid chain: Large ribosomal subunit protein uL23 (94 aa).

The protein belongs to the universal ribosomal protein uL23 family. In terms of assembly, part of the 50S ribosomal subunit. Contacts protein L29, and trigger factor when it is bound to the ribosome.

Its function is as follows. One of the early assembly proteins it binds 23S rRNA. One of the proteins that surrounds the polypeptide exit tunnel on the outside of the ribosome. Forms the main docking site for trigger factor binding to the ribosome. The protein is Large ribosomal subunit protein uL23 of Mycoplasma mycoides subsp. mycoides SC (strain CCUG 32753 / NCTC 10114 / PG1).